Consider the following 242-residue polypeptide: Biosynthetic peptidoglycan transglycosylase (242 aa).

The chain crosses the membrane as a helical span at residues 19–39 (LMVVLAVFWGGGIALFSVAPV).

It belongs to the glycosyltransferase 51 family.

It localises to the cell inner membrane. The catalysed reaction is [GlcNAc-(1-&gt;4)-Mur2Ac(oyl-L-Ala-gamma-D-Glu-L-Lys-D-Ala-D-Ala)](n)-di-trans,octa-cis-undecaprenyl diphosphate + beta-D-GlcNAc-(1-&gt;4)-Mur2Ac(oyl-L-Ala-gamma-D-Glu-L-Lys-D-Ala-D-Ala)-di-trans,octa-cis-undecaprenyl diphosphate = [GlcNAc-(1-&gt;4)-Mur2Ac(oyl-L-Ala-gamma-D-Glu-L-Lys-D-Ala-D-Ala)](n+1)-di-trans,octa-cis-undecaprenyl diphosphate + di-trans,octa-cis-undecaprenyl diphosphate + H(+). Its pathway is cell wall biogenesis; peptidoglycan biosynthesis. Functionally, peptidoglycan polymerase that catalyzes glycan chain elongation from lipid-linked precursors. In Escherichia coli O139:H28 (strain E24377A / ETEC), this protein is Biosynthetic peptidoglycan transglycosylase.